The following is a 424-amino-acid chain: 3-phosphoshikimate 1-carboxyvinyltransferase (424 aa).

3-phosphoshikimate is bound by residues K21, S22, and R26. Residue K21 coordinates phosphoenolpyruvate. Phosphoenolpyruvate contacts are provided by G91 and R119. 4 residues coordinate 3-phosphoshikimate: S164, Q166, D310, and K337. Q166 contacts phosphoenolpyruvate. Catalysis depends on D310, which acts as the Proton acceptor. 2 residues coordinate phosphoenolpyruvate: R341 and R382.

Belongs to the EPSP synthase family. Monomer.

It localises to the cytoplasm. The catalysed reaction is 3-phosphoshikimate + phosphoenolpyruvate = 5-O-(1-carboxyvinyl)-3-phosphoshikimate + phosphate. It participates in metabolic intermediate biosynthesis; chorismate biosynthesis; chorismate from D-erythrose 4-phosphate and phosphoenolpyruvate: step 6/7. In terms of biological role, catalyzes the transfer of the enolpyruvyl moiety of phosphoenolpyruvate (PEP) to the 5-hydroxyl of shikimate-3-phosphate (S3P) to produce enolpyruvyl shikimate-3-phosphate and inorganic phosphate. In Campylobacter curvus (strain 525.92), this protein is 3-phosphoshikimate 1-carboxyvinyltransferase.